A 201-amino-acid chain; its full sequence is Peptidyl-prolyl cis-trans isomerase FKBP11 (201 aa).

An N-terminal signal peptide occupies residues 1-27; sequence MTLRPSLLPLHLLLLLLLSAAVCRAEA. The PPIase FKBP-type domain maps to 57 to 144; it reads GDTLHIHYTG…QYDVELIALI (88 aa). The helical transmembrane segment at 156–176 threads the bilayer; sequence ILPLVGMAMVPALLGLIGYHL.

The protein belongs to the FKBP-type PPIase family. In terms of assembly, interacts with IFITM5.

It localises to the membrane. The enzyme catalyses [protein]-peptidylproline (omega=180) = [protein]-peptidylproline (omega=0). In terms of biological role, PPIases accelerate the folding of proteins during protein synthesis. This chain is Peptidyl-prolyl cis-trans isomerase FKBP11 (FKBP11), found in Homo sapiens (Human).